Reading from the N-terminus, the 297-residue chain is 4-hydroxy-tetrahydrodipicolinate synthase (297 aa).

Thr-46 contributes to the pyruvate binding site. Tyr-136 acts as the Proton donor/acceptor in catalysis. Lys-165 serves as the catalytic Schiff-base intermediate with substrate. Thr-206 lines the pyruvate pocket.

Belongs to the DapA family. In terms of assembly, homotetramer; dimer of dimers.

It is found in the cytoplasm. It catalyses the reaction L-aspartate 4-semialdehyde + pyruvate = (2S,4S)-4-hydroxy-2,3,4,5-tetrahydrodipicolinate + H2O + H(+). Its pathway is amino-acid biosynthesis; L-lysine biosynthesis via DAP pathway; (S)-tetrahydrodipicolinate from L-aspartate: step 3/4. In terms of biological role, catalyzes the condensation of (S)-aspartate-beta-semialdehyde [(S)-ASA] and pyruvate to 4-hydroxy-tetrahydrodipicolinate (HTPA). This Sulfurimonas denitrificans (strain ATCC 33889 / DSM 1251) (Thiomicrospira denitrificans (strain ATCC 33889 / DSM 1251)) protein is 4-hydroxy-tetrahydrodipicolinate synthase.